The chain runs to 80 residues: MAKIGVEPSLTDVQEALKERGYDVVPLRGEQDARGCDCCVITGLDANIAGIHNIVTSGPVIEASGLTAEEICQKVEEKLR.

The protein belongs to the UPF0180 family.

The protein is UPF0180 protein GK1051 of Geobacillus kaustophilus (strain HTA426).